The primary structure comprises 287 residues: Octanoyl-[GcvH]:protein N-octanoyltransferase (287 aa).

Positions 45–253 constitute a BPL/LPL catalytic domain; that stretch reads GESPATARSW…ELKELSGRLY (209 aa). C150 acts as the Acyl-thioester intermediate in catalysis.

This sequence belongs to the octanoyltransferase LipL family.

The enzyme catalyses N(6)-octanoyl-L-lysyl-[glycine-cleavage complex H protein] + L-lysyl-[lipoyl-carrier protein] = N(6)-octanoyl-L-lysyl-[lipoyl-carrier protein] + L-lysyl-[glycine-cleavage complex H protein]. The protein operates within protein modification; protein lipoylation via endogenous pathway; protein N(6)-(lipoyl)lysine from octanoyl-[acyl-carrier-protein]. Functionally, catalyzes the amidotransfer (transamidation) of the octanoyl moiety from octanoyl-GcvH to the lipoyl domain of the E2 subunit of lipoate-dependent enzymes. This chain is Octanoyl-[GcvH]:protein N-octanoyltransferase, found in Bacillus velezensis (strain DSM 23117 / BGSC 10A6 / LMG 26770 / FZB42) (Bacillus amyloliquefaciens subsp. plantarum).